A 234-amino-acid polypeptide reads, in one-letter code: Large ribosomal subunit protein uL1 (234 aa).

Belongs to the universal ribosomal protein uL1 family. In terms of assembly, part of the 50S ribosomal subunit.

Functionally, binds directly to 23S rRNA. The L1 stalk is quite mobile in the ribosome, and is involved in E site tRNA release. In terms of biological role, protein L1 is also a translational repressor protein, it controls the translation of the L11 operon by binding to its mRNA. This chain is Large ribosomal subunit protein uL1, found in Aliivibrio fischeri (strain ATCC 700601 / ES114) (Vibrio fischeri).